We begin with the raw amino-acid sequence, 343 residues long: Holliday junction branch migration complex subunit RuvB (343 aa).

Residues 4-193 (TDNLTAAQPQ…FGIVSRLEFY (190 aa)) are large ATPase domain (RuvB-L). Residues Leu-32, Arg-33, Gly-74, Lys-77, Thr-78, Thr-79, 140–142 (EDY), Arg-183, Tyr-193, and Arg-230 each bind ATP. Position 78 (Thr-78) interacts with Mg(2+). Residues 194-264 (ENRDLTTIVS…IADAALSMLD (71 aa)) are small ATPAse domain (RuvB-S). A head domain (RuvB-H) region spans residues 267–343 (AQGLDVMDRK…YLHFGLPVEK (77 aa)). The DNA site is built by Arg-322 and Arg-327.

The protein belongs to the RuvB family. In terms of assembly, homohexamer. Forms an RuvA(8)-RuvB(12)-Holliday junction (HJ) complex. HJ DNA is sandwiched between 2 RuvA tetramers; dsDNA enters through RuvA and exits via RuvB. An RuvB hexamer assembles on each DNA strand where it exits the tetramer. Each RuvB hexamer is contacted by two RuvA subunits (via domain III) on 2 adjacent RuvB subunits; this complex drives branch migration. In the full resolvosome a probable DNA-RuvA(4)-RuvB(12)-RuvC(2) complex forms which resolves the HJ.

It localises to the cytoplasm. The catalysed reaction is ATP + H2O = ADP + phosphate + H(+). In terms of biological role, the RuvA-RuvB-RuvC complex processes Holliday junction (HJ) DNA during genetic recombination and DNA repair, while the RuvA-RuvB complex plays an important role in the rescue of blocked DNA replication forks via replication fork reversal (RFR). RuvA specifically binds to HJ cruciform DNA, conferring on it an open structure. The RuvB hexamer acts as an ATP-dependent pump, pulling dsDNA into and through the RuvAB complex. RuvB forms 2 homohexamers on either side of HJ DNA bound by 1 or 2 RuvA tetramers; 4 subunits per hexamer contact DNA at a time. Coordinated motions by a converter formed by DNA-disengaged RuvB subunits stimulates ATP hydrolysis and nucleotide exchange. Immobilization of the converter enables RuvB to convert the ATP-contained energy into a lever motion, pulling 2 nucleotides of DNA out of the RuvA tetramer per ATP hydrolyzed, thus driving DNA branch migration. The RuvB motors rotate together with the DNA substrate, which together with the progressing nucleotide cycle form the mechanistic basis for DNA recombination by continuous HJ branch migration. Branch migration allows RuvC to scan DNA until it finds its consensus sequence, where it cleaves and resolves cruciform DNA. This Neisseria meningitidis serogroup C (strain 053442) protein is Holliday junction branch migration complex subunit RuvB.